Reading from the N-terminus, the 223-residue chain is Serum amyloid P-component (223 aa).

The signal sequence occupies residues 1–19; sequence MDKMLFWVSVFTIFLDVFA. A Pentraxin (PTX) domain is found at 24–223; that stretch reads DKKVFVFPRE…YVIIKPRVWD (200 aa). Cysteine 55 and cysteine 114 are joined by a disulfide. Positions 77, 78, 155, 156, 157, and 167 each coordinate Ca(2+). Asparagine 198 carries N-linked (GlcNAc...) asparagine glycosylation.

Belongs to the pentraxin family. In terms of assembly, homopentamer. Pentraxin (or pentaxin) have a discoid arrangement of 5 non-covalently bound subunits. Requires Ca(2+) as cofactor.

The protein resides in the secreted. This is Serum amyloid P-component (PTX2) from Cavia porcellus (Guinea pig).